A 259-amino-acid polypeptide reads, in one-letter code: Imidazole glycerol phosphate synthase subunit HisF (259 aa).

Active-site residues include aspartate 11 and aspartate 130.

The protein belongs to the HisA/HisF family. As to quaternary structure, heterodimer of HisH and HisF.

It localises to the cytoplasm. It catalyses the reaction 5-[(5-phospho-1-deoxy-D-ribulos-1-ylimino)methylamino]-1-(5-phospho-beta-D-ribosyl)imidazole-4-carboxamide + L-glutamine = D-erythro-1-(imidazol-4-yl)glycerol 3-phosphate + 5-amino-1-(5-phospho-beta-D-ribosyl)imidazole-4-carboxamide + L-glutamate + H(+). It participates in amino-acid biosynthesis; L-histidine biosynthesis; L-histidine from 5-phospho-alpha-D-ribose 1-diphosphate: step 5/9. Its function is as follows. IGPS catalyzes the conversion of PRFAR and glutamine to IGP, AICAR and glutamate. The HisF subunit catalyzes the cyclization activity that produces IGP and AICAR from PRFAR using the ammonia provided by the HisH subunit. This is Imidazole glycerol phosphate synthase subunit HisF from Solidesulfovibrio magneticus (strain ATCC 700980 / DSM 13731 / RS-1) (Desulfovibrio magneticus).